The chain runs to 270 residues: tRNA pseudouridine synthase A (270 aa).

Asp-60 functions as the Nucleophile in the catalytic mechanism. Tyr-118 serves as a coordination point for substrate.

Belongs to the tRNA pseudouridine synthase TruA family. In terms of assembly, homodimer.

It carries out the reaction uridine(38/39/40) in tRNA = pseudouridine(38/39/40) in tRNA. Functionally, formation of pseudouridine at positions 38, 39 and 40 in the anticodon stem and loop of transfer RNAs. The sequence is that of tRNA pseudouridine synthase A from Salmonella agona (strain SL483).